The following is a 473-amino-acid chain: Homeobox protein ATH1 (473 aa).

An SR/KY domain region spans residues 205 to 221 (SKYLHSVQEILSHFAAY). The tract at residues 266–336 (QRRALEAKKT…NLRERICKKI (71 aa)) is BELL domain. Positions 372 to 434 (IWRPQRGLPE…NARVRLWKPM (63 aa)) form a DNA-binding region, homeobox. The segment at 448–473 (NNSHIQPNGPTLRMPKSVMMSQAMHK) is disordered.

The protein belongs to the TALE/BELL homeobox family. In terms of assembly, may form heterodimeric complex with the TALE/KNOX protein STM. As to expression, most abundant in flowers.

The protein localises to the nucleus. Functionally, transcription factor which may be involved in the signal transduction pathway downstream of the COP1 gene. Controls floral competency as a specific activator of FLC expression. Is responsive of the nuclear import of SHOOT MERISTEMLESS (STM). The sequence is that of Homeobox protein ATH1 (ATH1) from Arabidopsis thaliana (Mouse-ear cress).